The chain runs to 309 residues: Low density lipoprotein receptor adapter protein 1-A (309 aa).

One can recognise a PID domain in the interval 41 to 195 (LLEGMLFHLK…SGGEGASSSQ (155 aa)). Positions 179-199 (EKREKSGSGGEGASSSQSDGS) are disordered. The short motif at 213-217 (LLDLE) is the Clathrin box element. The segment at 250–277 (WELDDGLDEAFARLAESRTNPQVLDIGL) is AP-2 complex binding. A [DE]-X(1,2)-F-X-X-[FL]-X-X-X-R motif motif is present at residues 258 to 267 (EAFARLAESR).

In terms of assembly, interacts (via PID domain) with ldlr (via NPXY motif). Binds to soluble clathrin trimers and to the adapter protein complex 2 (AP-2, beta 2 subunit). Binds to phosphoinositides, which regulate clathrin bud assembly at the cell surface. Interacts with the VLDL receptor (vldlr). Interacts with the vitellogenin receptor. Expressed at high level during oogenesis and embryogenesis. Found in the oocyte vegetal cortex. Found at low level in the adult liver and spleen. Found at very low level in testis and heart.

It localises to the cytoplasm. In terms of biological role, adapter protein (clathrin-associated sorting protein (CLASP)) required for efficient endocytosis of the LDL receptor (LDLR). Also involved in the vitellogenin receptor mediated endocytosis of nutrients during oogenesis. The chain is Low density lipoprotein receptor adapter protein 1-A from Xenopus laevis (African clawed frog).